The chain runs to 409 residues: Serine protease inhibitor 2 (409 aa).

The N-terminal stretch at 1-21 (MNKLNFVILCLAALLVFDATA) is a signal peptide. Residues N294 and N324 are each glycosylated (N-linked (GlcNAc...) asparagine). Residues 356-360 (LGSEA) carry the Hinge region; required for binding to peptidase motif.

This sequence belongs to the serpin family. Forms a covalent heterodimer with protease CLIPB9; the interaction inhibits CLIPB9 protease activity. Forms a covalent heterodimer with protease CLIPB10; the interaction inhibits CLIPB10 catalytic activity. Interacts with CLIPB4 in the hemolymph of immune-challenged female mosquitoes; the interaction results in CLIPB4 inhibition. Protease CLIPB9 binds to SRPN2 via the hinge region resulting in the cleavage of the reactive bond. This leads to a conformational change in SRPN2 which traps CLIPB9 and distorts its active site, resulting in CLIPB9 inactivation.

Its subcellular location is the secreted. Functionally, serine protease inhibitor that functions in the melanization-mediated immune response. By preventing the activation of phenoloxidases through the inhibiting of serine proteases CLIPB9, CLIPB10 and CLIPB4, negatively regulates melanization in the hemolymph. By preventing melanization, has a detrimental role during P.berghei parasite mediated-infection and invasion of the mosquito midgut. This chain is Serine protease inhibitor 2, found in Anopheles gambiae (African malaria mosquito).